The following is a 199-amino-acid chain: Thymidine kinase (199 aa).

Residues 23 to 30 (GSMFSGKT) and 95 to 98 (DEAQ) contribute to the ATP site. The active-site Proton acceptor is Glu-96. Zn(2+) is bound by residues Cys-152, Cys-155, Cys-184, and Cys-187.

It belongs to the thymidine kinase family. As to quaternary structure, homotetramer.

It is found in the cytoplasm. The catalysed reaction is thymidine + ATP = dTMP + ADP + H(+). This Bacteroides fragilis (strain ATCC 25285 / DSM 2151 / CCUG 4856 / JCM 11019 / LMG 10263 / NCTC 9343 / Onslow / VPI 2553 / EN-2) protein is Thymidine kinase.